A 354-amino-acid chain; its full sequence is GTPase Obg (354 aa).

The Obg domain occupies 1 to 159 (MKFLDQCKIY…RWIWLRLKLI (159 aa)). Positions 160–328 (ADVGLVGLPN…LLRAAYKQVR (169 aa)) constitute an OBG-type G domain. Residues 166 to 173 (GLPNAGKS), 191 to 195 (FTTLT), 213 to 216 (DIPG), 280 to 283 (NKID), and 309 to 311 (SGV) contribute to the GTP site. 2 residues coordinate Mg(2+): serine 173 and threonine 193. The span at 335-345 (EEEIDDDEDHV) shows a compositional bias: acidic residues. Positions 335–354 (EEEIDDDEDHVDETPGGWTP) are disordered.

This sequence belongs to the TRAFAC class OBG-HflX-like GTPase superfamily. OBG GTPase family. In terms of assembly, monomer. Mg(2+) serves as cofactor.

Its subcellular location is the cytoplasm. Its function is as follows. An essential GTPase which binds GTP, GDP and possibly (p)ppGpp with moderate affinity, with high nucleotide exchange rates and a fairly low GTP hydrolysis rate. Plays a role in control of the cell cycle, stress response, ribosome biogenesis and in those bacteria that undergo differentiation, in morphogenesis control. This Caulobacter vibrioides (strain ATCC 19089 / CIP 103742 / CB 15) (Caulobacter crescentus) protein is GTPase Obg.